The chain runs to 507 residues: Xylose import ATP-binding protein XylG (507 aa).

ABC transporter domains follow at residues 5–242 and 259–504; these read LKMT…VGRE and LEVK…LSEK. 37–44 is a binding site for ATP; sequence GENGSGKS.

This sequence belongs to the ABC transporter superfamily. Xylose importer (TC 3.A.1.2.4) family. As to quaternary structure, the complex is composed of two ATP-binding proteins (XylG), two transmembrane proteins (XylH) and a solute-binding protein (XylF).

It is found in the cell inner membrane. The catalysed reaction is D-xylose(out) + ATP + H2O = D-xylose(in) + ADP + phosphate + H(+). In terms of biological role, part of the ABC transporter complex XylFGH involved in xylose import. Responsible for energy coupling to the transport system. The protein is Xylose import ATP-binding protein XylG of Photobacterium profundum (strain SS9).